A 352-amino-acid polypeptide reads, in one-letter code: Ferrochelatase (352 aa).

2 residues coordinate Fe cation: H222 and E303.

This sequence belongs to the ferrochelatase family.

The protein localises to the cytoplasm. The enzyme catalyses heme b + 2 H(+) = protoporphyrin IX + Fe(2+). It participates in porphyrin-containing compound metabolism; protoheme biosynthesis; protoheme from protoporphyrin-IX: step 1/1. Its function is as follows. Catalyzes the ferrous insertion into protoporphyrin IX. This Brucella melitensis biotype 2 (strain ATCC 23457) protein is Ferrochelatase.